We begin with the raw amino-acid sequence, 405 residues long: Probable dual-specificity RNA methyltransferase RlmN (405 aa).

Positions 1-15 (MSSTGSSVSTSGLVL) are enriched in low complexity. Residues 1–34 (MSSTGSSVSTSGLVLPSTPLAEPGKEVPLVVNTP) form a disordered region. The Proton acceptor role is filled by glutamate 130. The 245-residue stretch at 142-386 (SAARATLCLS…VTVRDTRGSE (245 aa)) folds into the Radical SAM core domain. The cysteines at positions 149 and 391 are disulfide-linked. The [4Fe-4S] cluster site is built by cysteine 156, cysteine 160, and cysteine 163. Residues 211 to 212 (GE), serine 245, 268 to 270 (SLH), and asparagine 348 each bind S-adenosyl-L-methionine. Cysteine 391 serves as the catalytic S-methylcysteine intermediate.

It belongs to the radical SAM superfamily. RlmN family. It depends on [4Fe-4S] cluster as a cofactor.

The protein resides in the cytoplasm. It catalyses the reaction adenosine(2503) in 23S rRNA + 2 reduced [2Fe-2S]-[ferredoxin] + 2 S-adenosyl-L-methionine = 2-methyladenosine(2503) in 23S rRNA + 5'-deoxyadenosine + L-methionine + 2 oxidized [2Fe-2S]-[ferredoxin] + S-adenosyl-L-homocysteine. The enzyme catalyses adenosine(37) in tRNA + 2 reduced [2Fe-2S]-[ferredoxin] + 2 S-adenosyl-L-methionine = 2-methyladenosine(37) in tRNA + 5'-deoxyadenosine + L-methionine + 2 oxidized [2Fe-2S]-[ferredoxin] + S-adenosyl-L-homocysteine. Its function is as follows. Specifically methylates position 2 of adenine 2503 in 23S rRNA and position 2 of adenine 37 in tRNAs. This is Probable dual-specificity RNA methyltransferase RlmN from Cutibacterium acnes (strain DSM 16379 / KPA171202) (Propionibacterium acnes).